The following is a 348-amino-acid chain: Phosphoribosylformylglycinamidine cyclo-ligase (348 aa).

The protein belongs to the AIR synthase family.

Its subcellular location is the cytoplasm. The enzyme catalyses 2-formamido-N(1)-(5-O-phospho-beta-D-ribosyl)acetamidine + ATP = 5-amino-1-(5-phospho-beta-D-ribosyl)imidazole + ADP + phosphate + H(+). It participates in purine metabolism; IMP biosynthesis via de novo pathway; 5-amino-1-(5-phospho-D-ribosyl)imidazole from N(2)-formyl-N(1)-(5-phospho-D-ribosyl)glycinamide: step 2/2. This chain is Phosphoribosylformylglycinamidine cyclo-ligase, found in Roseobacter denitrificans (strain ATCC 33942 / OCh 114) (Erythrobacter sp. (strain OCh 114)).